Here is a 455-residue protein sequence, read N- to C-terminus: Venom prothrombin activator trocarin-D (455 aa).

Residues 1 to 20 (MAPQLLLCLILTFLWSLPEA) form the signal peptide. A propeptide spanning residues 21 to 40 (ESNVFLKSKVANRFLQRTKR) is cleaved from the precursor. The Gla domain maps to 41 to 86 (SNSLFEEIRPGNIERECIEEKCSKEEAREVFEDNEKTETFWNVYVD). A 4-carboxyglutamate mark is found at E46, E47, E54, E56, E59, E60, E65, E66, E69, E72, and E75. Cysteines 57 and 62 form a disulfide. Residues 86–122 (DGDQCSSNPCHYRGTCKDGIGSYTCTCLPNYEGKNCE) form the EGF-like 1; calcium-binding domain. Intrachain disulfides connect C90–C101, C95–C110, C112–C121, C129–C140, C136–C149, C151–C164, C172–C328, C216–C221, C236–C252, C376–C390, and C401–C429. S92 is a glycosylation site (O-linked (Hex...) serine). Residues 129-164 (CRVDNGNCWHFCKRVQSETQCSCAESYRLGVDGHSC) enclose the EGF-like 2 domain. Residues 182-209 (REASLPDFVQSQKATLLKKSDNPSPDIR) constitute a propeptide, activation peptide. Positions 210-453 (IVNGMDCKLG…FIPWIKKIMS (244 aa)) constitute a Peptidase S1 domain. H251 serves as the catalytic Charge relay system. N-linked (GlcNAc...) asparagine glycosylation occurs at N254. D308 functions as the Charge relay system in the catalytic mechanism. Catalysis depends on S405, which acts as the Charge relay system.

This sequence belongs to the peptidase S1 family. Snake venom subfamily. Heterodimer of a light chain and a heavy chain; disulfide-linked. In terms of processing, gamma-carboxyglutamate residues are formed by vitamin K dependent carboxylation. These residues are essential for the binding of calcium. The O-linked saccharides at Ser-92 are a mixture of Xyl-Glc, and Glc along with smaller amounts of Xyl-GlcNAc, GlcNAc, Gal, GalNAc, Xyl-Gal, and Xyl-GalNAc, suggesting that the glycosyl transferases responsible for this modification are non-specific. The N-linked carbohydrate at Asn-254 (Asn-45 of the heavy chain) is a sialylated and diantennary oligosaccharide. Expressed by the venom gland.

The protein localises to the secreted. The catalysed reaction is Selective cleavage of Arg-|-Thr and then Arg-|-Ile bonds in prothrombin to form thrombin.. With respect to regulation, activated by calcium and phospholipids. Snake prothrombin activator that attacks the hemostatic system of prey. This protein is functionally similar to blood coagulation factor Xa. Induces cyanosis and death in mice at 1 mg/kg body weight during blood clotting. The polypeptide is Venom prothrombin activator trocarin-D (Tropidechis carinatus (Australian rough-scaled snake)).